A 272-amino-acid polypeptide reads, in one-letter code: Formamidopyrimidine-DNA glycosylase (272 aa).

The active-site Schiff-base intermediate with DNA is the Pro2. Glu3 (proton donor) is an active-site residue. Lys58 functions as the Proton donor; for beta-elimination activity in the catalytic mechanism. Positions 94, 112, and 153 each coordinate DNA. Residues 238–272 (FVYDRAGEPCRVCGAPIRQIVQGQRSTYFCPNCQR) form an FPG-type zinc finger. Arg262 serves as the catalytic Proton donor; for delta-elimination activity.

This sequence belongs to the FPG family. In terms of assembly, monomer. Requires Zn(2+) as cofactor.

The catalysed reaction is Hydrolysis of DNA containing ring-opened 7-methylguanine residues, releasing 2,6-diamino-4-hydroxy-5-(N-methyl)formamidopyrimidine.. The enzyme catalyses 2'-deoxyribonucleotide-(2'-deoxyribose 5'-phosphate)-2'-deoxyribonucleotide-DNA = a 3'-end 2'-deoxyribonucleotide-(2,3-dehydro-2,3-deoxyribose 5'-phosphate)-DNA + a 5'-end 5'-phospho-2'-deoxyribonucleoside-DNA + H(+). Involved in base excision repair of DNA damaged by oxidation or by mutagenic agents. Acts as a DNA glycosylase that recognizes and removes damaged bases. Has a preference for oxidized purines, such as 7,8-dihydro-8-oxoguanine (8-oxoG). Has AP (apurinic/apyrimidinic) lyase activity and introduces nicks in the DNA strand. Cleaves the DNA backbone by beta-delta elimination to generate a single-strand break at the site of the removed base with both 3'- and 5'-phosphates. This is Formamidopyrimidine-DNA glycosylase from Burkholderia mallei (strain NCTC 10229).